Here is an 888-residue protein sequence, read N- to C-terminus: Phosphoenolpyruvate carboxylase (888 aa).

Catalysis depends on residues histidine 144 and lysine 553.

This sequence belongs to the PEPCase type 1 family. Requires Mg(2+) as cofactor.

It catalyses the reaction oxaloacetate + phosphate = phosphoenolpyruvate + hydrogencarbonate. Functionally, forms oxaloacetate, a four-carbon dicarboxylic acid source for the tricarboxylic acid cycle. This is Phosphoenolpyruvate carboxylase from Alcanivorax borkumensis (strain ATCC 700651 / DSM 11573 / NCIMB 13689 / SK2).